A 344-amino-acid polypeptide reads, in one-letter code: DnaJ homolog subfamily C member 25 (344 aa).

The chain crosses the membrane as a helical span at residues 5 to 25 (WVLLVALSVLFLSGRAGALTE). One can recognise a J domain in the interval 33–108 (VCYDVLGVSR…ETRKDYDYML (76 aa)). 2 helical membrane-spanning segments follow: residues 134–154 (IVIL…WWSS) and 228–248 (ILLF…SWYV).

It belongs to the DNAJC25 family.

The protein localises to the membrane. The sequence is that of DnaJ homolog subfamily C member 25 (dnajc25) from Xenopus laevis (African clawed frog).